The following is a 457-amino-acid chain: Adenylosuccinate synthetase isozyme 2 (457 aa).

Residues 40-46 (GDEGKGK) and 68-70 (GHT) contribute to the GTP site. The active-site Proton acceptor is D41. Residues D41 and G68 each contribute to the Mg(2+) site. Residue D41 coordinates substrate. IMP contacts are provided by residues 41 to 44 (DEGK), 66 to 69 (NAGH), T163, R177, N256, T271, and R335. H69 acts as the Proton donor in catalysis. 331–337 (VTTGRKR) contacts substrate. Residues R337, 363-365 (KLD), and 445-448 (GVGK) each bind GTP.

It belongs to the adenylosuccinate synthetase family. Homodimer. The cofactor is Mg(2+).

It is found in the cytoplasm. The protein localises to the mitochondrion. It carries out the reaction IMP + L-aspartate + GTP = N(6)-(1,2-dicarboxyethyl)-AMP + GDP + phosphate + 2 H(+). It participates in purine metabolism; AMP biosynthesis via de novo pathway; AMP from IMP: step 1/2. Inhibited competitively by AMP and IMP and non-competitively by fructose 1,6-bisphosphate. Plays an important role in the de novo pathway and in the salvage pathway of purine nucleotide biosynthesis. Catalyzes the first committed step in the biosynthesis of AMP from IMP. This chain is Adenylosuccinate synthetase isozyme 2 (adss2), found in Xenopus laevis (African clawed frog).